Consider the following 83-residue polypeptide: MFNMENSAAKGEKAARQLFDLEQDMHDVTKAHEVNANVQSKVQTLTSSLREGASKESFEKQQTLLAGYVALQKVLGRINRKMV.

It belongs to the chlamydial CPn_0711/CT_665/TC_0036 family.

This is an uncharacterized protein from Chlamydia trachomatis serovar D (strain ATCC VR-885 / DSM 19411 / UW-3/Cx).